The following is a 224-amino-acid chain: ATP-dependent dethiobiotin synthetase BioD (224 aa).

ATP is bound at residue 14-19; sequence GIGKTV. Thr18 is a binding site for Mg(2+). Residue Lys39 is part of the active site. Ser43 lines the substrate pocket. ATP contacts are provided by residues Asp56, 117–120, and 177–178; these read EGVG and NE. Mg(2+) is bound by residues Asp56 and Glu117.

The protein belongs to the dethiobiotin synthetase family. Homodimer. Mg(2+) serves as cofactor.

It is found in the cytoplasm. It catalyses the reaction (7R,8S)-7,8-diammoniononanoate + CO2 + ATP = (4R,5S)-dethiobiotin + ADP + phosphate + 3 H(+). The protein operates within cofactor biosynthesis; biotin biosynthesis; biotin from 7,8-diaminononanoate: step 1/2. Catalyzes a mechanistically unusual reaction, the ATP-dependent insertion of CO2 between the N7 and N8 nitrogen atoms of 7,8-diaminopelargonic acid (DAPA, also called 7,8-diammoniononanoate) to form a ureido ring. The protein is ATP-dependent dethiobiotin synthetase BioD of Xanthomonas campestris pv. campestris (strain ATCC 33913 / DSM 3586 / NCPPB 528 / LMG 568 / P 25).